We begin with the raw amino-acid sequence, 541 residues long: Atlastin-3 (541 aa).

Residues 1–22 (MLSPQRTAAVASRGAGDAMENG) form a disordered region. Positions 1–25 (MLSPQRTAAVASRGAGDAMENGKPG) are N-terminal hypervariable region (HVR). The Cytoplasmic segment spans residues 1–445 (MLSPQRTAAV…NVFSTFRTPA (445 aa)). The region spanning 57 to 305 (DLDVVVVSVA…LIPYVLNPSK (249 aa)) is the GB1/RHD3-type G domain. The GDP site is built by R70, K71, G72, K73, S74, F75, and R109. D142 serves as a coordination point for Mg(2+). GDP contacts are provided by R213, D214, V272, and S275. The 3HB (three-helix bundle) domain stretch occupies residues 343-434 (MLQATAEANN…YENFCKHNGS (92 aa)). An N6-acetyllysine modification is found at K391. A helical membrane pass occupies residues 446-466 (VLFTGIAALYIASGFTGFIGL). E467 is a topological domain (lumenal). A helical membrane pass occupies residues 468 to 488 (VVAQLFNCMVGLLLIALLTWG). The Cytoplasmic segment spans residues 489–541 (YIRYSGQYRELGGAIDSGAAYVLEQASSHIGNSTQAAVRDAVVGRPPADKKSQ).

Belongs to the TRAFAC class dynamin-like GTPase superfamily. GB1/RHD3 GTPase family. GB1 subfamily. In terms of assembly, monomeric and homodimeric. The homodimer, transiently formed by two molecules on opposing membranes, is the active form mediating ER membrane fusion. Interacts with ZFYVE27; both proteins are involved in endoplasmic reticulum tubular network organization. Interacts with REEP5; both proteins are involved in endoplasmic reticulum tubular network organization. In terms of tissue distribution, expressed in cardiomyocytes (at protein level).

Its subcellular location is the endoplasmic reticulum membrane. It catalyses the reaction GTP + H2O = GDP + phosphate + H(+). Functionally, atlastin-3 (ATL3) is a membrane-anchored GTPase that mediates the GTP-dependent fusion of endoplasmic reticulum (ER) membranes, maintaining the continuous ER network. It facilitates the formation of three-way junctions where ER tubules intersect. Two atlastin-3 on neighboring ER tubules bind GTP and form loose homodimers through the GB1/RHD3-type G domains and 3HB regions. Upon GTP hydrolysis, the 3HB regions tighten, pulling the membranes together to drive their fusion. After fusion, the homodimer disassembles upon release of inorganic phosphate (Pi). Subsequently, GDP dissociates, resetting the monomers to a conformation ready for a new fusion cycle. This chain is Atlastin-3, found in Mus musculus (Mouse).